The chain runs to 373 residues: Glutamate 5-kinase (373 aa).

Lys-15 serves as a coordination point for ATP. Residues Ser-56, Asp-143, and Asn-155 each coordinate substrate. 175 to 176 (SD) serves as a coordination point for ATP. Residues 281–358 (KGTLTIDAGA…PDVMTILGIS (78 aa)) form the PUA domain.

This sequence belongs to the glutamate 5-kinase family.

It localises to the cytoplasm. It carries out the reaction L-glutamate + ATP = L-glutamyl 5-phosphate + ADP. Its pathway is amino-acid biosynthesis; L-proline biosynthesis; L-glutamate 5-semialdehyde from L-glutamate: step 1/2. Functionally, catalyzes the transfer of a phosphate group to glutamate to form L-glutamate 5-phosphate. This Bradyrhizobium diazoefficiens (strain JCM 10833 / BCRC 13528 / IAM 13628 / NBRC 14792 / USDA 110) protein is Glutamate 5-kinase.